We begin with the raw amino-acid sequence, 62 residues long: MGQCSSATKMRRKRKREEECCRESMERRNKGCLAMVKERRSRFYIARRCILMLLCWHKYANS.

Residues 27–58 (RRNKGCLAMVKERRSRFYIARRCILMLLCWHK) form a required for DVL/RTFL small polypeptide activity region. The chain crosses the membrane as a helical span at residues 39–56 (RRSRFYIARRCILMLLCW).

This sequence belongs to the DVL/RTFL small polypeptides family.

It localises to the cell membrane. Small polypeptide acting as a regulatory molecule which coordinates cellular responses required for differentiation, growth and development, probably by restricting polar cell proliferation in lateral organs and coordinating socket cell recruitment and differentiation at trichome sites. This Arabidopsis thaliana (Mouse-ear cress) protein is Small polypeptide DEVIL 17.